The following is a 677-amino-acid chain: Methionine--tRNA ligase (677 aa).

The short motif at 15 to 25 (PYANGSIHLGH) is the 'HIGH' region element. 4 residues coordinate Zn(2+): cysteine 146, cysteine 149, cysteine 159, and cysteine 162. Residues 333-337 (KMSKS) carry the 'KMSKS' region motif. An ATP-binding site is contributed by lysine 336. The tRNA-binding domain occupies 575–677 (DFAKVDLRVA…AGAKPGHQVK (103 aa)).

The protein belongs to the class-I aminoacyl-tRNA synthetase family. MetG type 1 subfamily. Homodimer. Requires Zn(2+) as cofactor.

It localises to the cytoplasm. The catalysed reaction is tRNA(Met) + L-methionine + ATP = L-methionyl-tRNA(Met) + AMP + diphosphate. Is required not only for elongation of protein synthesis but also for the initiation of all mRNA translation through initiator tRNA(fMet) aminoacylation. In Escherichia coli (strain ATCC 8739 / DSM 1576 / NBRC 3972 / NCIMB 8545 / WDCM 00012 / Crooks), this protein is Methionine--tRNA ligase.